The following is a 513-amino-acid chain: Mesoderm induction early response protein 1 (513 aa).

The span at 1 to 16 (MAEPSVESSSPGGSAT) shows a compositional bias: low complexity. The segment at 1–174 (MAEPSVESSS…EEESEEDEDY (174 aa)) is disordered. Composition is skewed to basic and acidic residues over residues 17–36 (SDDH…FDDE) and 46–63 (EGER…RESD). The segment covering 82 to 107 (QEDDDDEDEEEEEEEGEDDDDVDNDD) has biased composition (acidic residues). Over residues 131–146 (QSSNDDPAPSVASQDP) the composition is skewed to polar residues. Residues 157 to 261 (YFDTNSEIEE…IKDNEQALYE (105 aa)) form an interaction with HDAC1 region. Residues 162–174 (SEIEEESEEDEDY) show a composition bias toward acidic residues. Residues 182-280 (KEIMVGSMFQ…ESLRRLRFNV (99 aa)) enclose the ELM2 domain. One can recognise an SANT domain in the interval 285 to 337 (EELSVWTEEECRNFEQGLKVYGKDFHVIQANKVRTRSVGECVAFYYMWKKSER). Residues 368 to 513 (ESESAASSRA…KLEELETLDD (146 aa)) are disordered. Basic and acidic residues-rich tracts occupy residues 416-425 (PSKDEAKPEG) and 463-476 (SRSE…NERP). The span at 483 to 500 (NSNGKESPGSSEFFQEAN) shows a compositional bias: polar residues.

It is found in the nucleus. Functionally, transcriptional repressor regulating the expression of a number of genes. Probably functions through recruitment of histone deacetylases involved in chromatin silencing. This chain is Mesoderm induction early response protein 1 (MIER1), found in Gallus gallus (Chicken).